We begin with the raw amino-acid sequence, 481 residues long: Chromosomal replication initiator protein DnaA (481 aa).

The domain I, interacts with DnaA modulators stretch occupies residues 1 to 71 (MTDLSAFWPQ…ETFAEDILGR (71 aa)). The segment at 71-143 (RPVTIELRIG…PAIGGGHEST (73 aa)) is domain II. The span at 86–96 (ASAPAAASPRS) shows a compositional bias: low complexity. Positions 86-110 (ASAPAAASPRSPGRPAPAPVAATPT) are disordered. Residues 144–361 (RLNPAFTFES…GALKRVVAYS (218 aa)) are domain III, AAA+ region. ATP contacts are provided by glycine 189, glycine 191, lysine 192, and threonine 193. The interval 362–481 (RFSNQPISLD…YAALQQMLRN (120 aa)) is domain IV, binds dsDNA.

It belongs to the DnaA family. In terms of assembly, oligomerizes as a right-handed, spiral filament on DNA at oriC.

The protein localises to the cytoplasm. Plays an essential role in the initiation and regulation of chromosomal replication. ATP-DnaA binds to the origin of replication (oriC) to initiate formation of the DNA replication initiation complex once per cell cycle. Binds the DnaA box (a 9 base pair repeat at the origin) and separates the double-stranded (ds)DNA. Forms a right-handed helical filament on oriC DNA; dsDNA binds to the exterior of the filament while single-stranded (ss)DNA is stabiized in the filament's interior. The ATP-DnaA-oriC complex binds and stabilizes one strand of the AT-rich DNA unwinding element (DUE), permitting loading of DNA polymerase. After initiation quickly degrades to an ADP-DnaA complex that is not apt for DNA replication. Binds acidic phospholipids. This chain is Chromosomal replication initiator protein DnaA, found in Laribacter hongkongensis (strain HLHK9).